The following is a 302-amino-acid chain: GTP cyclohydrolase FolE2 (302 aa).

Residues 1–27 (MPKKQLPPKEERHKLFGSVPPKERTKP) form a disordered region.

It belongs to the GTP cyclohydrolase IV family.

The catalysed reaction is GTP + H2O = 7,8-dihydroneopterin 3'-triphosphate + formate + H(+). The protein operates within cofactor biosynthesis; 7,8-dihydroneopterin triphosphate biosynthesis; 7,8-dihydroneopterin triphosphate from GTP: step 1/1. In terms of biological role, converts GTP to 7,8-dihydroneopterin triphosphate. In Oceanobacillus iheyensis (strain DSM 14371 / CIP 107618 / JCM 11309 / KCTC 3954 / HTE831), this protein is GTP cyclohydrolase FolE2.